Reading from the N-terminus, the 92-residue chain is Large ribosomal subunit protein eL43 (92 aa).

Zn(2+) is bound by residues Cys39, Cys42, Cys57, and Cys60. Residues Cys39–Cys60 form a C4-type zinc finger.

Belongs to the eukaryotic ribosomal protein eL43 family. Putative zinc-binding subfamily. In terms of assembly, part of the 50S ribosomal subunit. Contacts protein L2. Zn(2+) is required as a cofactor.

Functionally, binds to the 23S rRNA. The sequence is that of Large ribosomal subunit protein eL43 from Haloarcula marismortui (strain ATCC 43049 / DSM 3752 / JCM 8966 / VKM B-1809) (Halobacterium marismortui).